Reading from the N-terminus, the 427-residue chain is 3-phosphoshikimate 1-carboxyvinyltransferase (427 aa).

3 residues coordinate 3-phosphoshikimate: lysine 22, serine 23, and arginine 27. Lysine 22 serves as a coordination point for phosphoenolpyruvate. Residues glycine 96 and arginine 124 each coordinate phosphoenolpyruvate. Serine 170, serine 171, glutamine 172, serine 199, aspartate 313, asparagine 336, and lysine 340 together coordinate 3-phosphoshikimate. Glutamine 172 contacts phosphoenolpyruvate. Aspartate 313 acts as the Proton acceptor in catalysis. Phosphoenolpyruvate is bound by residues arginine 344, arginine 386, and lysine 411.

This sequence belongs to the EPSP synthase family. In terms of assembly, monomer.

It localises to the cytoplasm. The enzyme catalyses 3-phosphoshikimate + phosphoenolpyruvate = 5-O-(1-carboxyvinyl)-3-phosphoshikimate + phosphate. Its pathway is metabolic intermediate biosynthesis; chorismate biosynthesis; chorismate from D-erythrose 4-phosphate and phosphoenolpyruvate: step 6/7. Functionally, catalyzes the transfer of the enolpyruvyl moiety of phosphoenolpyruvate (PEP) to the 5-hydroxyl of shikimate-3-phosphate (S3P) to produce enolpyruvyl shikimate-3-phosphate and inorganic phosphate. This chain is 3-phosphoshikimate 1-carboxyvinyltransferase, found in Aeromonas salmonicida.